Reading from the N-terminus, the 494-residue chain is Glycerol kinase (494 aa).

Thr-13 contributes to the ADP binding site. ATP contacts are provided by Thr-13, Thr-14, and Ser-15. Thr-13 provides a ligand contact to sn-glycerol 3-phosphate. Arg-17 lines the ADP pocket. Sn-glycerol 3-phosphate-binding residues include Arg-83, Glu-84, Tyr-135, and Asp-244. Positions 83, 84, 135, 244, and 245 each coordinate glycerol. ADP is bound by residues Thr-266 and Gly-309. ATP contacts are provided by Thr-266, Gly-309, Gln-313, and Gly-410. 2 residues coordinate ADP: Gly-410 and Asn-414.

It belongs to the FGGY kinase family.

The enzyme catalyses glycerol + ATP = sn-glycerol 3-phosphate + ADP + H(+). The protein operates within polyol metabolism; glycerol degradation via glycerol kinase pathway; sn-glycerol 3-phosphate from glycerol: step 1/1. With respect to regulation, inhibited by fructose 1,6-bisphosphate (FBP). Its function is as follows. Key enzyme in the regulation of glycerol uptake and metabolism. Catalyzes the phosphorylation of glycerol to yield sn-glycerol 3-phosphate. This chain is Glycerol kinase, found in Shewanella baltica (strain OS185).